The primary structure comprises 339 residues: 2,3,4,5-tetrahydropyridine-2,6-dicarboxylate N-succinyltransferase (339 aa).

Asp180 lines the Mg(2+) pocket. Glu213 serves as the catalytic Acyl-anhydride intermediate. Succinyl-CoA-binding positions include Arg215, Gly230, Ser233, Ala256, 271-272 (EA), Gly279, and Lys300.

This sequence belongs to the type 2 tetrahydrodipicolinate N-succinyltransferase family. In terms of assembly, homotrimer.

Its subcellular location is the cytoplasm. It catalyses the reaction (S)-2,3,4,5-tetrahydrodipicolinate + succinyl-CoA + H2O = (S)-2-succinylamino-6-oxoheptanedioate + CoA. Its pathway is amino-acid biosynthesis; L-lysine biosynthesis via DAP pathway; LL-2,6-diaminopimelate from (S)-tetrahydrodipicolinate (succinylase route): step 1/3. Functionally, catalyzes the conversion of the cyclic tetrahydrodipicolinate (THDP) into the acyclic N-succinyl-L-2-amino-6-oxopimelate using succinyl-CoA. The sequence is that of 2,3,4,5-tetrahydropyridine-2,6-dicarboxylate N-succinyltransferase from Bifidobacterium longum (strain NCC 2705).